Consider the following 158-residue polypeptide: Urease accessory protein UreE (158 aa).

It belongs to the UreE family.

The protein resides in the cytoplasm. Involved in urease metallocenter assembly. Binds nickel. Probably functions as a nickel donor during metallocenter assembly. This Microcystis aeruginosa (strain NIES-843 / IAM M-2473) protein is Urease accessory protein UreE.